A 277-amino-acid polypeptide reads, in one-letter code: Carbonyl reductase [NADPH] 1 (277 aa).

An N-acetylserine modification is found at S2. Phosphoserine is present on residues S2 and S30. NADP(+) contacts are provided by residues 10 to 34 (VTGGNKGIGLAIVRDLCRLFSGDVV), 63 to 64 (DI), and N90. Glutathione contacts are provided by residues 95–97 (FKV) and Q106. S140 is a substrate binding site. Glutathione is bound at residue 193–194 (AY). Y194 serves as the catalytic Proton acceptor. NADP(+)-binding positions include 194–198 (YGVTK) and 231–233 (VRT). Residue K239 is modified to N6-1-carboxyethyl lysine.

Belongs to the short-chain dehydrogenases/reductases (SDR) family. In terms of assembly, monomer.

It localises to the cytoplasm. It catalyses the reaction a secondary alcohol + NADP(+) = a ketone + NADPH + H(+). The catalysed reaction is prostaglandin F2alpha + NADP(+) = prostaglandin E2 + NADPH + H(+). The enzyme catalyses prostaglandin E1 + NADP(+) = 15-oxoprostaglandin E1 + NADPH + H(+). It carries out the reaction menadione + NADPH + H(+) = menadiol + NADP(+). It catalyses the reaction prostaglandin D2 + NADP(+) = 15-oxoprostaglandin D2 + NADPH + H(+). The catalysed reaction is prostaglandin E2 + NADP(+) = 15-oxoprostaglandin E2 + NADPH + H(+). The enzyme catalyses prostaglandin F2alpha + NADP(+) = 15-oxoprostaglandin F2alpha + NADPH + H(+). It carries out the reaction daunorubicin + NADPH + H(+) = 13-dihydrodaunorubicin + NADP(+). It catalyses the reaction S-nitrosoglutathione + NADPH + H(+) = S-(hydroxysulfenamide)glutathione + NADP(+). The catalysed reaction is a primary alcohol + NADP(+) = an aldehyde + NADPH + H(+). The enzyme catalyses cortisol + NADPH + H(+) = 20beta-dihydrocortisol + NADP(+). It carries out the reaction corticosterone + NADPH + H(+) = 20beta-dihydrocorticosterone + NADP(+). Functionally, NADPH-dependent reductase with broad substrate specificity. Catalyzes the reduction of a wide variety of carbonyl compounds including quinones, prostaglandins, menadione, plus various xenobiotics. Catalyzes the reduction of the antitumor anthracyclines doxorubicin and daunorubicin to the cardiotoxic compounds doxorubicinol and daunorubicinol. Can convert prostaglandin E to prostaglandin F2-alpha. Can bind glutathione, which explains its higher affinity for glutathione-conjugated substrates. Catalyzes the reduction of S-nitrosoglutathione. In addition, participates in the glucocorticoid metabolism by catalyzing the NADPH-dependent cortisol/corticosterone into 20beta-dihydrocortisol (20b-DHF) or 20beta-corticosterone (20b-DHB), which are weak agonists of NR3C1 and NR3C2 in adipose tissue. This is Carbonyl reductase [NADPH] 1 from Pongo abelii (Sumatran orangutan).